We begin with the raw amino-acid sequence, 2225 residues long: Multifunctional protein CAD (2225 aa).

Ala2 is subject to N-acetylalanine. A GATase (Glutamine amidotransferase) region spans residues 2–365; the sequence is AALVLEDGSV…TVKEATAGNP (364 aa). The L-glutamine site is built by Ser44, Gly222, and Gly224. The 187-residue stretch at 177 to 363 folds into the Glutamine amidotransferase type-1 domain; it reads RILALDCGLK…LETVKEATAG (187 aa). Cys252 (nucleophile; for GATase activity) is an active-site residue. The L-glutamine site is built by Leu253, Gln256, Asn294, Gly296, and Phe297. Catalysis depends on for GATase activity residues His336 and Glu338. A linker region spans residues 366-394; that stretch reads GGQTVRERLTERLCPPGIPTPGSGLPPPR. The CPSase A stretch occupies residues 395–933; it reads KVLILGSGGL…TTHDLTFRTP (539 aa). A CPSase (Carbamoyl phosphate synthase) region spans residues 395–1455; sequence KVLILGSGGL…APPLKVHVDC (1061 aa). Thr456 carries the post-translational modification Phosphothreonine; by MAPK1. Residues Arg515, Arg555, Gly561, Gly562, Lys592, Glu599, Gly625, Ile626, His627, Gln668, and Glu682 each contribute to the ATP site. Residues 519–711 form the ATP-grasp 1 domain; that stretch reads AARMAEIGEH…LAYVAAKLAL (193 aa). The Mg(2+) site is built by Gln668, Glu682, and Asn684. 3 residues coordinate Mn(2+): Gln668, Glu682, and Asn684. Lys747 bears the N6-acetyllysine mark. A CPSase B region spans residues 934–1455; the sequence is HVLVLGSGVY…APPLKVHVDC (522 aa). Ser1038 is modified (phosphoserine). Residues 1052 to 1243 form the ATP-grasp 2 domain; that stretch reads SRLLDTIGIS…LVALATRVIM (192 aa). ATP is bound by residues Arg1088, Lys1127, Ile1129, Glu1134, Gly1159, Val1160, His1161, Ser1162, Gln1202, and Glu1214. Mg(2+)-binding residues include Gln1202, Glu1214, and Asn1216. The Mn(2+) site is built by Gln1202, Glu1214, and Asn1216. The MGS-like domain maps to 1308-1462; it reads FKIPKKNILL…VDCMTSQKLV (155 aa). The residue at position 1406 (Ser1406) is a Phosphoserine; by PKA. The residue at position 1411 (Lys1411) is an N6-acetyllysine. The DHOase (dihydroorotase) stretch occupies residues 1456–1788; it reads MTSQKLVRLP…VKGTVRRVVL (333 aa). Zn(2+) is bound by residues His1471 and His1473. Arg1475 and Asn1505 together coordinate (S)-dihydroorotate. Zn(2+)-binding residues include Lys1556, His1590, Cys1613, His1614, and Glu1637. The residue at position 1556 (Lys1556) is an N6-carboxylysine. Arg1661 is a (S)-dihydroorotate binding site. Asp1686 contacts Zn(2+). The active-site For DHOase activity is the Asp1686. (S)-dihydroorotate is bound by residues His1690 and Pro1702. The linker stretch occupies residues 1789–1917; sequence RGEVAYIDGQ…GLLHPQTSPL (129 aa). The tract at residues 1811-1899 is disordered; sequence KWPQGAVPQL…YPPPPVPRQA (89 aa). Over residues 1825–1834 the composition is skewed to polar residues; that stretch reads PATSEMTTTP. A Phosphoserine; by RPS6KB1 and PKA modification is found at Ser1859. Residues 1866–1878 show a composition bias toward basic and acidic residues; the sequence is EEPKEKSSRKVAE. Ser1873 carries the post-translational modification Phosphoserine; by PKC; in vitro. Phosphothreonine is present on Thr1884. A phosphoserine mark is found at Ser1900 and Ser1938. The interval 1918–2225 is ATCase (Aspartate transcarbamylase); the sequence is LHSLVGQHIL…ALLATVLGRF (308 aa). Residues Arg1975 and Thr1976 each coordinate carbamoyl phosphate. Lys2003 lines the L-aspartate pocket. Carbamoyl phosphate is bound by residues Arg2024, His2052, and Gln2055. L-aspartate contacts are provided by Arg2085 and Arg2146. Carbamoyl phosphate contacts are provided by Met2185 and Pro2186.

It in the N-terminal section; belongs to the CarA family. This sequence in the 2nd section; belongs to the CarB family. The protein in the 3rd section; belongs to the metallo-dependent hydrolases superfamily. DHOase family. CAD subfamily. In the C-terminal section; belongs to the aspartate/ornithine carbamoyltransferase superfamily. ATCase family. In terms of assembly, homohexamer. Interacts with CIPC. The cofactor is Zn(2+). It depends on Mg(2+) as a cofactor. Requires Mn(2+) as cofactor. Post-translationally, activated by MAP kinase (Erk1/2) phosphorylation just prior to the S phase of the cell cycle, when the demand for pyrimidine nucleotides is greatest, and down-regulated as the cells emerge from S phase by protein kinase A (PKA) phosphorylation. Phosphorylation at Ser-1859 by RPS6KB1 downstream of MTOR promotes oligomerization and stimulates dihydroorotase activity. Phosphorylation at Ser-1406 reduces sensitivity to feedback inhibition by UTP.

Its subcellular location is the cytoplasm. The protein resides in the nucleus. The enzyme catalyses hydrogencarbonate + L-glutamine + 2 ATP + H2O = carbamoyl phosphate + L-glutamate + 2 ADP + phosphate + 2 H(+). It catalyses the reaction L-glutamine + H2O = L-glutamate + NH4(+). The catalysed reaction is hydrogencarbonate + NH4(+) + 2 ATP = carbamoyl phosphate + 2 ADP + phosphate + 2 H(+). It carries out the reaction carbamoyl phosphate + L-aspartate = N-carbamoyl-L-aspartate + phosphate + H(+). The enzyme catalyses (S)-dihydroorotate + H2O = N-carbamoyl-L-aspartate + H(+). The protein operates within pyrimidine metabolism; UMP biosynthesis via de novo pathway; (S)-dihydroorotate from bicarbonate: step 1/3. It functions in the pathway pyrimidine metabolism; UMP biosynthesis via de novo pathway; (S)-dihydroorotate from bicarbonate: step 2/3. It participates in pyrimidine metabolism; UMP biosynthesis via de novo pathway; (S)-dihydroorotate from bicarbonate: step 3/3. With respect to regulation, allosterically regulated and controlled by phosphorylation. 5-phosphoribose 1-diphosphate (PRPP) is an activator while UMP and UTP are inhibitors of the CPSase reaction. Functionally, multifunctional protein that encodes the first 3 enzymatic activities of the de novo pyrimidine pathway: carbamoylphosphate synthetase (CPSase; EC 6.3.5.5), aspartate transcarbamylase (ATCase; EC 2.1.3.2) and dihydroorotase (DHOase; EC 3.5.2.3). The CPSase-function is accomplished in 2 steps, by a glutamine-dependent amidotransferase activity (GATase) that binds and cleaves glutamine to produce ammonia, followed by an ammonium-dependent carbamoyl phosphate synthetase, which reacts with the ammonia, hydrogencarbonate and ATP to form carbamoyl phosphate. The endogenously produced carbamoyl phosphate is sequestered and channeled to the ATCase active site. ATCase then catalyzes the formation of carbamoyl-L-aspartate from L-aspartate and carbamoyl phosphate. In the last step, DHOase catalyzes the cyclization of carbamoyl aspartate to dihydroorotate. This Homo sapiens (Human) protein is Multifunctional protein CAD.